A 218-amino-acid polypeptide reads, in one-letter code: Ribose-5-phosphate isomerase A (218 aa).

Residues lysine 7, 28-31 (TGST), 81-84 (DGAD), and 94-97 (KGGG) contribute to the substrate site. The Proton acceptor role is filled by glutamate 103. Lysine 121 serves as a coordination point for substrate.

This sequence belongs to the ribose 5-phosphate isomerase family. Homodimer.

The enzyme catalyses aldehydo-D-ribose 5-phosphate = D-ribulose 5-phosphate. The protein operates within carbohydrate degradation; pentose phosphate pathway; D-ribose 5-phosphate from D-ribulose 5-phosphate (non-oxidative stage): step 1/1. Catalyzes the reversible conversion of ribose-5-phosphate to ribulose 5-phosphate. This chain is Ribose-5-phosphate isomerase A, found in Vibrio vulnificus (strain YJ016).